Consider the following 202-residue polypeptide: uncharacterized protein (202 aa).

This is an uncharacterized protein from Galliformes (FAdV-1).